A 408-amino-acid chain; its full sequence is GTPase Obg (408 aa).

An Obg domain is found at 1-159; sequence MKFVDEVSIR…RDLKMEMKVL (159 aa). A disordered region spans residues 127–150; sequence NTRFKSSTNRAPRQTTPGKPGDQR. Polar residues predominate over residues 129-143; sequence RFKSSTNRAPRQTTP. The region spanning 160–333 is the OBG-type G domain; it reads ADVGLLGLPN…LSHDLMRYLE (174 aa). GTP-binding positions include 166–173, 191–195, 213–216, 283–286, and 314–316; these read GLPNAGKS, FTTLV, DIPG, NKSD, and SAI. Residues serine 173 and threonine 193 each coordinate Mg(2+). Residues 382 to 408 are disordered; that stretch reads HDIGDDDGWDDDFEDDEDGPEIIYVRD. A compositionally biased stretch (acidic residues) spans 385–401; that stretch reads GDDDGWDDDFEDDEDGP.

Belongs to the TRAFAC class OBG-HflX-like GTPase superfamily. OBG GTPase family. As to quaternary structure, monomer. It depends on Mg(2+) as a cofactor.

Its subcellular location is the cytoplasm. Functionally, an essential GTPase which binds GTP, GDP and possibly (p)ppGpp with moderate affinity, with high nucleotide exchange rates and a fairly low GTP hydrolysis rate. Plays a role in control of the cell cycle, stress response, ribosome biogenesis and in those bacteria that undergo differentiation, in morphogenesis control. This chain is GTPase Obg, found in Pseudomonas putida (strain GB-1).